The primary structure comprises 2894 residues: uncharacterized protein (2894 aa).

Residues Ile-8–Ser-28 traverse the membrane as a helical segment. PbH1 repeat units follow at residues Glu-543–Leu-567, Asn-2085–Asn-2107, Phe-2135–Lys-2156, Gly-2158–Asn-2180, Ile-2201–Asn-2223, Ser-2224–Glu-2244, Asn-2245–Asn-2266, Ser-2267–Asn-2289, Gly-2290–Gly-2311, Leu-2341–Ser-2363, Ala-2367–Gly-2389, Val-2390–Gly-2419, Thr-2422–Gly-2444, Val-2455–Gly-2477, Val-2479–Glu-2501, Gly-2512–Ala-2542, Asn-2550–Gly-2582, Ser-2589–Ala-2611, Ser-2612–Asn-2633, and Pro-2638–Asp-2660.

The protein localises to the membrane. This is an uncharacterized protein from Methanocaldococcus jannaschii (strain ATCC 43067 / DSM 2661 / JAL-1 / JCM 10045 / NBRC 100440) (Methanococcus jannaschii).